A 354-amino-acid polypeptide reads, in one-letter code: NADH-quinone oxidoreductase subunit H (354 aa).

The next 8 helical transmembrane spans lie at 25–45 (LVRILVVAVVILLCVAYLILW), 91–111 (WLYLVAPVMTVVPAFAVWAVI), 126–146 (LLYAMAISSIGVYAVILAGWA), 170–190 (MGFALVLVLMTAGSLNLSEIV), 205–225 (FLSWNWLPLLPVFVIYFISGI), 253–273 (MAFALFFLAEYINMIVISALA), 290–310 (FIPGIFWLVLKIFALLSVFIW), and 330–350 (VFLPVCVFWVIVVGFWMMSPL).

Belongs to the complex I subunit 1 family. In terms of assembly, NDH-1 is composed of 14 different subunits. Subunits NuoA, H, J, K, L, M, N constitute the membrane sector of the complex.

The protein resides in the cell inner membrane. The enzyme catalyses a quinone + NADH + 5 H(+)(in) = a quinol + NAD(+) + 4 H(+)(out). Functionally, NDH-1 shuttles electrons from NADH, via FMN and iron-sulfur (Fe-S) centers, to quinones in the respiratory chain. The immediate electron acceptor for the enzyme in this species is believed to be ubiquinone. Couples the redox reaction to proton translocation (for every two electrons transferred, four hydrogen ions are translocated across the cytoplasmic membrane), and thus conserves the redox energy in a proton gradient. This subunit may bind ubiquinone. This Burkholderia mallei (strain ATCC 23344) protein is NADH-quinone oxidoreductase subunit H.